The chain runs to 177 residues: Insertion element IS1223 uncharacterized 20.7 kDa protein (177 aa).

Positions lysine 112–leucine 131 are disordered. The span at glutamine 113 to threonine 128 shows a compositional bias: basic residues.

The protein belongs to the IS150/IS1296 orfA family.

This Lactobacillus johnsonii protein is Insertion element IS1223 uncharacterized 20.7 kDa protein.